Reading from the N-terminus, the 687-residue chain is Dictomallein (687 aa).

2 disordered regions span residues 1-45 (MGNG…SRRL) and 73-112 (TAGG…STSA). Positions 233–501 (PVFGTDADVQ…QAWIASRVLA (269 aa)) constitute a Peptidase M66 domain. Zn(2+) is bound at residue histidine 393. Residue glutamate 394 is part of the active site. Histidine 397 and histidine 403 together coordinate Zn(2+).

It belongs to the dictomallein family. Zn(2+) is required as a cofactor.

The sequence is that of Dictomallein (dtmL) from Burkholderia pseudomallei (strain 1710b).